The primary structure comprises 1174 residues: Tight junction protein 2 (1174 aa).

Positions 10–97 constitute a PDZ 1 domain; the sequence is TVTLQKDSKR…IAAIVVKRPR (88 aa). 10 positions are modified to phosphoserine: S107, S127, S130, S140, S145, S147, S151, S173, S195, and S217. Basic and acidic residues predominate over residues 125–137; it reads GRSARSGYSERSR. Residues 125–290 are disordered; it reads GRSARSGYSE…AGQPDSDRPI (166 aa). The span at 146–214 shows a compositional bias: basic and acidic residues; sequence RSWEDSPERG…DYGRPGERSH (69 aa). Residues 220 to 235 are compositionally biased toward basic and acidic residues; that stretch reads RGYDRGYDRGYDRGYD. S239 carries the phosphoserine modification. Basic and acidic residues-rich tracts occupy residues 243 to 266 and 274 to 288; these read EYGR…EHLR and LRGR…DSDR. Positions 291–369 constitute a PDZ 2 domain; that stretch reads GVLLMKSKAN…KLQLVVLRDS (79 aa). 8 positions are modified to phosphoserine: S309, S382, S384, S390, S399, S408, S414, and S415. A disordered region spans residues 391-430; that stretch reads EIESNRSFSPEERRQQYSDYDYHSSNEKLKERPNSREDMQ. Basic and acidic residues predominate over residues 399 to 430; the sequence is SPEERRQQYSDYDYHSSNEKLKERPNSREDMQ. T439 bears the Phosphothreonine mark. The tract at residues 456–490 is disordered; sequence ENSKEPRYQEEPPAPQPKAAPRTFLRPSPEDEAIY. Residue S483 is modified to Phosphoserine. Positions 493 to 574 constitute a PDZ 3 domain; it reads NTKMVRFKKG…GEMVTILAQS (82 aa). Y558 is subject to Phosphotyrosine. In terms of domain architecture, SH3 spans 588–653; sequence GDSFFIRSHF…PNKSRAEQMA (66 aa). One can recognise a Guanylate kinase-like domain in the interval 679 to 860; it reads MKKNLRKSRE…WFGSLKDTIQ (182 aa). 2 positions are modified to phosphoserine: S686 and S886. T889 bears the Phosphothreonine mark. Phosphoserine occurs at positions 897 and 904. 2 disordered regions span residues 904-1065 and 1100-1174; these read SDFE…VLGK and DIYA…DTEL. T909 and T917 each carry phosphothreonine. Positions 940–951 are enriched in basic and acidic residues; that stretch reads VQHEESIRKPSP. Phosphoserine is present on residues S950, S962, S970, S990, and S1052. Residues 978–1000 are compositionally biased toward basic and acidic residues; that stretch reads EPPKAKTQNREESFDISRSHDYK. Acidic residues predominate over residues 1044–1056; the sequence is ESEEVGEGSEEQE. The residue at position 1102 (Y1102) is a Phosphotyrosine. 2 positions are modified to phosphoserine: S1131 and S1143. Basic and acidic residues predominate over residues 1150–1159; it reads YRQQLSEHSK. The interaction with SCRIB stretch occupies residues 1172-1174; sequence TEL.

This sequence belongs to the MAGUK family. In terms of assembly, homodimer. Interacts (via PDZ2 domain) with TJP1/ZO1 (via PDZ2 domain). Interacts with UBN1. Interacts with SCRIB. Interacts with OCLN. Interacts with SAFB in the nucleus. Interacts with USP53 (via the C-terminal region). Interacts with claudins, including CLDN1, CLDN2, CLDN3, CLDN5 and CLDN7. Interacts with CLDN18. Interacts (via N-terminus) with CTNNA1. In terms of processing, phosphorylated.

It is found in the cell junction. The protein resides in the adherens junction. It localises to the cell membrane. The protein localises to the nucleus. Its subcellular location is the tight junction. Plays a role in tight junctions and adherens junctions. Acts as a positive regulator of RANKL-induced osteoclast differentiation, potentially via mediating downstream transcriptional activity. In Canis lupus familiaris (Dog), this protein is Tight junction protein 2.